The following is a 635-amino-acid chain: Threonine--tRNA ligase (635 aa).

Residues 1–61 (MINISFPDGS…ENDCKLRILT (61 aa)) enclose the TGS domain. The tract at residues 242–533 (DHRKLGKELD…LIEEYAGCFP (292 aa)) is catalytic. Residues Cys333, His384, and His510 each contribute to the Zn(2+) site.

Belongs to the class-II aminoacyl-tRNA synthetase family. In terms of assembly, homodimer. Zn(2+) is required as a cofactor.

It is found in the cytoplasm. It carries out the reaction tRNA(Thr) + L-threonine + ATP = L-threonyl-tRNA(Thr) + AMP + diphosphate + H(+). Catalyzes the attachment of threonine to tRNA(Thr) in a two-step reaction: L-threonine is first activated by ATP to form Thr-AMP and then transferred to the acceptor end of tRNA(Thr). Also edits incorrectly charged L-seryl-tRNA(Thr). This chain is Threonine--tRNA ligase, found in Rickettsia akari (strain Hartford).